Consider the following 660-residue polypeptide: Galactocerebrosidase (660 aa).

An N-terminal signal peptide occupies residues 1-18 (MQTHNFLCIISVILGCSA). Substrate is bound by residues T87 and W129. N147 carries an N-linked (GlcNAc...) asparagine glycan. N175 provides a ligand contact to substrate. E176 serves as the catalytic Proton donor/acceptor. E251 serves as the catalytic Nucleophile. C264 and C371 are disulfide-bonded. N293 and N356 each carry an N-linked (GlcNAc...) asparagine glycan. A substrate-binding site is contributed by R373. 6 N-linked (GlcNAc...) asparagine glycosylation sites follow: N413, N465, N495, N499, N537, and N578.

This sequence belongs to the glycosyl hydrolase 59 family.

It localises to the lysosome. The enzyme catalyses a beta-D-galactosyl-(1&lt;-&gt;1')-N-acylsphing-4-enine + H2O = an N-acylsphing-4-enine + D-galactose. It carries out the reaction beta-D-galactosyl-(1&lt;-&gt;1)-sphing-4-enine + H2O = sphing-4-enine + D-galactose. It catalyses the reaction a D-galactosylceramide + H2O = an N-acyl-sphingoid base + D-galactose. Functionally, hydrolyzes the galactose ester bonds of glycolipids such as galactosylceramide and galactosylsphingosine. This is Galactocerebrosidase from Danio rerio (Zebrafish).